Here is a 507-residue protein sequence, read N- to C-terminus: Dolichyl pyrophosphate Man9GlcNAc2 alpha-1,3-glucosyltransferase (507 aa).

The Cytoplasmic portion of the chain corresponds to 1–2 (ME). Residues 3 to 23 (SWTWMTVVVLLGLTVRWTVSL) traverse the membrane as a helical segment. At 24–114 (NSYSGAGKPP…SQAHKLFMRT (91 aa)) the chain is on the lumenal side. Asn-59 carries N-linked (GlcNAc...) asparagine glycosylation. The helical transmembrane segment at 115 to 135 (TVLAADLLIYIPAVLLYCYSL) threads the bilayer. Topologically, residues 136-143 (KEISPKRK) are cytoplasmic. Residues 144–164 (IASALCILLYPGLILIDYGHF) traverse the membrane as a helical segment. The Lumenal portion of the chain corresponds to 165-172 (QYNSVSLG). Residues 173–193 (FALWGVLGVSCDWDLLGSLAF) traverse the membrane as a helical segment. Residues 194–229 (CLALNYKQMELYHSLPFFCFLLGKCFKKGLRGKGSA) lie on the Cytoplasmic side of the membrane. A helical membrane pass occupies residues 230–250 (LFIRIACTVVASFLLCWLPFL). Residues 251 to 297 (TEREHALQVVRRLFPVDRGLFEDKVANIWCSLNVFLKIKDILPRHIQ) lie on the Lumenal side of the membrane. A helical membrane pass occupies residues 298 to 318 (IAISFCFTFLSLLPACIKLTV). Topologically, residues 319 to 332 (QPSAKGFRFTLVSC) are cytoplasmic. Residues 333 to 353 (ALSFFLFSFQVHEKSILLVSL) traverse the membrane as a helical segment. Topologically, residues 354–361 (PVCLVLTE) are lumenal. Residues 362–382 (IPFMSTWFLLVSTFSMLPLLL) form a helical membrane-spanning segment. The Cytoplasmic segment spans residues 383-385 (KDQ). A helical transmembrane segment spans residues 386–406 (LLLPSVVTVMAFLIACSTFFP). The Lumenal segment spans residues 407-437 (MFENTSEEQLQLKSFAVSVRRHLPGFTFLPR). Residues 438-458 (IIQCLFLSSVITMILLTILSV) traverse the membrane as a helical segment. The Cytoplasmic segment spans residues 459 to 468 (TLDPPQKLPD). A helical membrane pass occupies residues 469–489 (LFSVLICFVSCVNFVFFLVYF). The Lumenal segment spans residues 490-507 (NIVIMWDSKNGRNRKKID).

This sequence belongs to the ALG6/ALG8 glucosyltransferase family.

The protein resides in the endoplasmic reticulum membrane. The catalysed reaction is an alpha-D-Man-(1-&gt;2)-alpha-D-Man-(1-&gt;2)-alpha-D-Man-(1-&gt;3)-[alpha-D-Man-(1-&gt;2)-alpha-D-Man-(1-&gt;3)-[alpha-D-Man-(1-&gt;2)-alpha-D-Man-(1-&gt;6)]-alpha-D-Man-(1-&gt;6)]-beta-D-Man-(1-&gt;4)-beta-D-GlcNAc-(1-&gt;4)-alpha-D-GlcNAc-diphospho-di-trans,poly-cis-dolichol + a di-trans,poly-cis-dolichyl beta-D-glucosyl phosphate = an alpha-D-Glc-(1-&gt;3)-alpha-D-Man-(1-&gt;2)-alpha-D-Man-(1-&gt;2)-alpha-D-Man-(1-&gt;3)-[alpha-D-Man-(1-&gt;2)-alpha-D-Man-(1-&gt;3)-[alpha-D-Man-(1-&gt;2)-alpha-D-Man-(1-&gt;6)]-alpha-D-Man-(1-&gt;6)]-beta-D-Man-(1-&gt;4)-beta-D-GlcNAc-(1-&gt;4)-alpha-D-GlcNAc-diphospho-di-trans,poly-cis-dolichol + a di-trans,poly-cis-dolichyl phosphate + H(+). The protein operates within protein modification; protein glycosylation. Functionally, dolichyl pyrophosphate Man9GlcNAc2 alpha-1,3-glucosyltransferase that operates in the biosynthetic pathway of dolichol-linked oligosaccharides, the glycan precursors employed in protein asparagine (N)-glycosylation. The assembly of dolichol-linked oligosaccharides begins on the cytosolic side of the endoplasmic reticulum membrane and finishes in its lumen. The sequential addition of sugars to dolichol pyrophosphate produces dolichol-linked oligosaccharides containing fourteen sugars, including two GlcNAcs, nine mannoses and three glucoses. Once assembled, the oligosaccharide is transferred from the lipid to nascent proteins by oligosaccharyltransferases. In the lumen of the endoplasmic reticulum, adds the first glucose residue from dolichyl phosphate glucose (Dol-P-Glc) onto the lipid-linked oligosaccharide intermediate Man(9)GlcNAc(2)-PP-Dol to produce Glc(1)Man(9)GlcNAc(2)-PP-Dol. Glc(1)Man(9)GlcNAc(2)-PP-Dol is a substrate for ALG8, the following enzyme in the biosynthetic pathway. This Rattus norvegicus (Rat) protein is Dolichyl pyrophosphate Man9GlcNAc2 alpha-1,3-glucosyltransferase.